A 193-amino-acid chain; its full sequence is MASDELPVAAAATEEEDLVEILDEGSGRLDIARYVDHVRDLAAGAIATFEGTTRDSFEGRRVVELRYEAYGAMARRRLAAILREARAAHSLRRLAVAHRLGTVPAGEASVFVAASAVHRADAMEACRYVIDEVKASVPIWKKEVYDDGEVWKENREFLDRTTTDGTTASSPAPATRPAKGGGCCGSKVRANES.

Substrate contacts are provided by residues 118–119 (HR), Lys134, and 141–143 (KKE). The disordered stretch occupies residues 159-193 (DRTTTDGTTASSPAPATRPAKGGGCCGSKVRANES). The span at 163–178 (TDGTTASSPAPATRPA) shows a compositional bias: low complexity.

It belongs to the MoaE family. MOCS2B subfamily. As to quaternary structure, heterotetramer; composed of 2 small (MOCS2A) and 2 large (MOCS2B) subunits.

The protein localises to the cytoplasm. The enzyme catalyses 2 [molybdopterin-synthase sulfur-carrier protein]-C-terminal-Gly-aminoethanethioate + cyclic pyranopterin phosphate + H2O = molybdopterin + 2 [molybdopterin-synthase sulfur-carrier protein]-C-terminal Gly-Gly + 2 H(+). Its pathway is cofactor biosynthesis; molybdopterin biosynthesis. Its function is as follows. Catalytic subunit of the molybdopterin synthase complex, a complex that catalyzes the conversion of precursor Z into molybdopterin. Acts by mediating the incorporation of 2 sulfur atoms from thiocarboxylated MOCS2A into precursor Z to generate a dithiolene group. The protein is Molybdopterin synthase catalytic subunit of Oryza sativa subsp. indica (Rice).